Consider the following 380-residue polypeptide: 12-oxophytodienoate reductase 1 (380 aa).

FMN contacts are provided by residues 35–37, A68, and Q110; that span reads PLT. 182–185 serves as a coordination point for substrate; the sequence is HGAH. The active-site Proton donor is Y187. R234 contacts FMN. R275 is a substrate binding site. Residues G305 and 326 to 327 contribute to the FMN site; that span reads GR.

Belongs to the NADH:flavin oxidoreductase/NADH oxidase family. FMN serves as cofactor.

The enzyme catalyses (1S,2S)-OPC-8 + NADP(+) = (9S,13S,15Z)-12-oxophyto-10,15-dienoate + NADPH + H(+). It functions in the pathway lipid metabolism; oxylipin biosynthesis. In terms of biological role, probably involved in the biosynthesis or metabolism of oxylipin signaling molecules. In vitro, reduces cis(-)-12-oxophytodienoic acid (cis(-)-OPDA) and to cis(-)-OPC-8:0. The chain is 12-oxophytodienoate reductase 1 from Oryza sativa subsp. japonica (Rice).